We begin with the raw amino-acid sequence, 417 residues long: Gamma-glutamyl phosphate reductase (417 aa).

This sequence belongs to the gamma-glutamyl phosphate reductase family.

The protein localises to the cytoplasm. It carries out the reaction L-glutamate 5-semialdehyde + phosphate + NADP(+) = L-glutamyl 5-phosphate + NADPH + H(+). Its pathway is amino-acid biosynthesis; L-proline biosynthesis; L-glutamate 5-semialdehyde from L-glutamate: step 2/2. In terms of biological role, catalyzes the NADPH-dependent reduction of L-glutamate 5-phosphate into L-glutamate 5-semialdehyde and phosphate. The product spontaneously undergoes cyclization to form 1-pyrroline-5-carboxylate. The sequence is that of Gamma-glutamyl phosphate reductase from Shigella flexneri serotype 5b (strain 8401).